A 129-amino-acid chain; its full sequence is M-zodatoxin-Lt8j (129 aa).

A signal peptide spans 1-20 (MKYFVVALALVAAFACIAES). The propeptide occupies 21–60 (KPAESEHELAEVEEENELADLEDAVWLEHLADLSDLEEAR).

This sequence belongs to the cationic peptide 06 (cytoinsectotoxin) family. In terms of tissue distribution, expressed by the venom gland.

The protein resides in the secreted. In terms of biological role, insecticidal, cytolytic and antimicrobial peptide. Forms voltage-dependent, ion-permeable channels in membranes. At high concentration causes cell membrane lysis. This is M-zodatoxin-Lt8j (cit 1-9) from Lachesana tarabaevi (Spider).